Reading from the N-terminus, the 276-residue chain is Protease HtpX homolog (276 aa).

A helical transmembrane segment spans residues 14–34 (IVLFALIGQALGGTGGMLLAF). Histidine 130 is a binding site for Zn(2+). Glutamate 131 is an active-site residue. Histidine 134 serves as a coordination point for Zn(2+). Transmembrane regions (helical) follow at residues 145-165 (VAATLAGAITMLSRFALFFGG) and 171-191 (LVSLLMMILAPMAAMLIQSAI). Glutamate 196 provides a ligand contact to Zn(2+).

This sequence belongs to the peptidase M48B family. Zn(2+) is required as a cofactor.

The protein localises to the cell inner membrane. This chain is Protease HtpX homolog, found in Salinibacter ruber (strain DSM 13855 / M31).